The sequence spans 224 residues: tRNA (guanine-N(7)-)-methyltransferase (224 aa).

The S-adenosyl-L-methionine site is built by glutamate 54, glutamate 79, glutamate 106, and aspartate 129. Aspartate 129 is a catalytic residue. Lysine 133 and aspartate 165 together coordinate substrate.

It belongs to the class I-like SAM-binding methyltransferase superfamily. TrmB family.

It catalyses the reaction guanosine(46) in tRNA + S-adenosyl-L-methionine = N(7)-methylguanosine(46) in tRNA + S-adenosyl-L-homocysteine. Its pathway is tRNA modification; N(7)-methylguanine-tRNA biosynthesis. Its function is as follows. Catalyzes the formation of N(7)-methylguanine at position 46 (m7G46) in tRNA. This is tRNA (guanine-N(7)-)-methyltransferase from Chlamydia caviae (strain ATCC VR-813 / DSM 19441 / 03DC25 / GPIC) (Chlamydophila caviae).